The sequence spans 297 residues: Cyclin-dependent kinase 1 (297 aa).

The Protein kinase domain maps to 4 to 287 (FEKIEKIGEG…AKDILEHPYF (284 aa)). ATP is bound by residues 10–18 (IGEGTYGVV) and lysine 33. At threonine 14 the chain carries Phosphothreonine. Residue tyrosine 15 is modified to Phosphotyrosine. Aspartate 128 serves as the catalytic Proton acceptor. Phosphotyrosine is present on tyrosine 160. At threonine 161 the chain carries Phosphothreonine; by CAK.

This sequence belongs to the protein kinase superfamily. CMGC Ser/Thr protein kinase family. CDC2/CDKX subfamily. In terms of assembly, forms a stable but non-covalent complex with a regulatory subunit and with a cyclin. Component of the Frs-CycA-Cdk1 complex composed of Cdk1, CycA and Z600.

The protein localises to the nucleus. It catalyses the reaction L-seryl-[protein] + ATP = O-phospho-L-seryl-[protein] + ADP + H(+). It carries out the reaction L-threonyl-[protein] + ATP = O-phospho-L-threonyl-[protein] + ADP + H(+). The enzyme catalyses [DNA-directed RNA polymerase] + ATP = phospho-[DNA-directed RNA polymerase] + ADP + H(+). With respect to regulation, phosphorylation at Thr-14 or Tyr-15 inactivates the enzyme, while phosphorylation at Thr-161 activates it. Plays a key role in the control of the eukaryotic cell cycle. Required for entry into S-phase and mitosis. In embryos, promotes the release of Rif1 from chromatin during mid-blastula transition. p34 is a component of the kinase complex that phosphorylates the repetitive C-terminus of RNA polymerase II. The chain is Cyclin-dependent kinase 1 from Drosophila melanogaster (Fruit fly).